The primary structure comprises 266 residues: Signal peptidase I (266 aa).

The Cytoplasmic portion of the chain corresponds to 1 to 20 (MQTDNTKSNTNKTAKQEWGS). A helical transmembrane segment spans residues 21–41 (FAFVICIALLIRILIMEPFTV). Topologically, residues 42 to 266 (PTGSMKATIL…IFRNLYSTDE (225 aa)) are periplasmic. Active-site residues include Ser-45 and Lys-108.

Belongs to the peptidase S26 family.

It localises to the cell inner membrane. The catalysed reaction is Cleavage of hydrophobic, N-terminal signal or leader sequences from secreted and periplasmic proteins.. The polypeptide is Signal peptidase I (lepB) (Rickettsia felis (strain ATCC VR-1525 / URRWXCal2) (Rickettsia azadi)).